An 823-amino-acid chain; its full sequence is Translation initiation factor IF-2 (823 aa).

Disordered stretches follow at residues 30-66 (VPPSLARGTSTGKSFTTVEVRSKKRRPGEYISHDDKR) and 156-192 (TPSHSNKSGHDDRGGKKYAHGATGRHKEKEGVSIKKV). Residues 36 to 48 (RGTSTGKSFTTVE) are compositionally biased toward polar residues. Residues 56-66 (PGEYISHDDKR) are compositionally biased toward basic and acidic residues. The tr-type G domain maps to 322–491 (PRPPVVTVMG…LLLAEMLELS (170 aa)). The interval 331–338 (GHVDHGKT) is G1. 331–338 (GHVDHGKT) is a binding site for GTP. The G2 stretch occupies residues 356 to 360 (GITQH). The segment at 377–380 (DTPG) is G3. GTP-binding positions include 377–381 (DTPGH) and 431–434 (NKID). The segment at 431 to 434 (NKID) is G4. The G5 stretch occupies residues 467 to 469 (SAK).

Belongs to the TRAFAC class translation factor GTPase superfamily. Classic translation factor GTPase family. IF-2 subfamily.

The protein resides in the cytoplasm. Functionally, one of the essential components for the initiation of protein synthesis. Protects formylmethionyl-tRNA from spontaneous hydrolysis and promotes its binding to the 30S ribosomal subunits. Also involved in the hydrolysis of GTP during the formation of the 70S ribosomal complex. The polypeptide is Translation initiation factor IF-2 (Anaplasma phagocytophilum (strain HZ)).